Consider the following 358-residue polypeptide: tRNA-specific 2-thiouridylase MnmA (358 aa).

ATP contacts are provided by residues 6 to 13 (ALSGGVDS) and Met-32. Catalysis depends on Cys-103, which acts as the Nucleophile. Cys-103 and Cys-201 are disulfide-bonded. ATP is bound at residue Gly-127. The segment at 151–153 (KDQ) is interaction with tRNA. Cys-201 (cysteine persulfide intermediate) is an active-site residue.

This sequence belongs to the MnmA/TRMU family.

It is found in the cytoplasm. The catalysed reaction is S-sulfanyl-L-cysteinyl-[protein] + uridine(34) in tRNA + AH2 + ATP = 2-thiouridine(34) in tRNA + L-cysteinyl-[protein] + A + AMP + diphosphate + H(+). Catalyzes the 2-thiolation of uridine at the wobble position (U34) of tRNA, leading to the formation of s(2)U34. This is tRNA-specific 2-thiouridylase MnmA from Thermotoga maritima (strain ATCC 43589 / DSM 3109 / JCM 10099 / NBRC 100826 / MSB8).